The chain runs to 438 residues: 3-phosphoshikimate 1-carboxyvinyltransferase (438 aa).

Residues Lys21, Ser22, and Arg26 each coordinate 3-phosphoshikimate. Lys21 is a phosphoenolpyruvate binding site. The phosphoenolpyruvate site is built by Gly95 and Arg123. 3-phosphoshikimate is bound by residues Ser167, Gln169, Asp315, and Lys342. Residue Gln169 participates in phosphoenolpyruvate binding. Asp315 acts as the Proton acceptor in catalysis. Phosphoenolpyruvate contacts are provided by Arg346 and Arg387.

Belongs to the EPSP synthase family. Monomer.

Its subcellular location is the cytoplasm. It catalyses the reaction 3-phosphoshikimate + phosphoenolpyruvate = 5-O-(1-carboxyvinyl)-3-phosphoshikimate + phosphate. It functions in the pathway metabolic intermediate biosynthesis; chorismate biosynthesis; chorismate from D-erythrose 4-phosphate and phosphoenolpyruvate: step 6/7. Catalyzes the transfer of the enolpyruvyl moiety of phosphoenolpyruvate (PEP) to the 5-hydroxyl of shikimate-3-phosphate (S3P) to produce enolpyruvyl shikimate-3-phosphate and inorganic phosphate. This chain is 3-phosphoshikimate 1-carboxyvinyltransferase, found in Coxiella burnetii (strain CbuK_Q154) (Coxiella burnetii (strain Q154)).